Consider the following 44-residue polypeptide: MRDIKTYLSVAPVLTTLWFGSLAGLLIEINRLFPDALTFSFFSF.

Residues 7–27 (YLSVAPVLTTLWFGSLAGLLI) form a helical membrane-spanning segment.

The protein belongs to the PsaJ family.

The protein resides in the plastid. The protein localises to the chloroplast thylakoid membrane. May help in the organization of the PsaE and PsaF subunits. The protein is Photosystem I reaction center subunit IX of Drimys granadensis.